The primary structure comprises 299 residues: CDP-abequose synthase (299 aa).

T117 contacts substrate. Y134 functions as the Proton acceptor in the catalytic mechanism.

This sequence belongs to the NAD(P)-dependent epimerase/dehydratase family.

The enzyme catalyses CDP-alpha-D-abequose + NADP(+) = CDP-4-dehydro-3,6-dideoxy-alpha-D-glucose + NADPH + H(+). It functions in the pathway bacterial outer membrane biogenesis; LPS O-antigen biosynthesis. The chain is CDP-abequose synthase (rfbJ) from Salmonella typhimurium (strain LT2 / SGSC1412 / ATCC 700720).